The following is a 148-amino-acid chain: 3-dehydroquinate dehydratase (148 aa).

Catalysis depends on Tyr23, which acts as the Proton acceptor. Substrate is bound by residues Asn75, His81, and Asp88. Residue His101 is the Proton donor of the active site. Substrate is bound by residues 102 to 103 and Arg112; that span reads LS.

Belongs to the type-II 3-dehydroquinase family. In terms of assembly, homododecamer.

The enzyme catalyses 3-dehydroquinate = 3-dehydroshikimate + H2O. It functions in the pathway metabolic intermediate biosynthesis; chorismate biosynthesis; chorismate from D-erythrose 4-phosphate and phosphoenolpyruvate: step 3/7. Catalyzes a trans-dehydration via an enolate intermediate. The polypeptide is 3-dehydroquinate dehydratase (Xylella fastidiosa (strain 9a5c)).